Here is a 65-residue protein sequence, read N- to C-terminus: Conotoxin Lp5.1 (65 aa).

An N-terminal signal peptide occupies residues 1–22 (MRCVPVFIILLLLIPSAPSVDA). Residues 23-50 (QRKTKDDVPLASFHDNAKRTLKRLWNKR) constitute a propeptide that is removed on maturation.

Belongs to the conotoxin T superfamily. Post-translationally, contains 2 disulfide bonds that can be either 'C1-C3, C2-C4' or 'C1-C4, C2-C3', since these disulfide connectivities have been observed for conotoxins with cysteine framework V (for examples, see AC P0DQQ7 and AC P81755). As to expression, expressed by the venom duct.

The protein localises to the secreted. The polypeptide is Conotoxin Lp5.1 (Conus leopardus (Leopard cone)).